The primary structure comprises 1455 residues: DNA polymerase II large subunit (1455 aa).

The interval G1409 to K1440 is disordered. Residues K1419–P1438 show a composition bias toward basic and acidic residues.

Belongs to the archaeal DNA polymerase II family. Heterodimer of a large subunit and a small subunit. This protein undergoes a protein self splicing that involves a post-translational excision of the intervening region (intein) followed by peptide ligation.

It catalyses the reaction DNA(n) + a 2'-deoxyribonucleoside 5'-triphosphate = DNA(n+1) + diphosphate. The enzyme catalyses Exonucleolytic cleavage in the 3'- to 5'-direction to yield nucleoside 5'-phosphates.. Its function is as follows. Possesses two activities: a DNA synthesis (polymerase) and an exonucleolytic activity that degrades single-stranded DNA in the 3'- to 5'-direction. Has a template-primer preference which is characteristic of a replicative DNA polymerase. The chain is DNA polymerase II large subunit (polC) from Pyrococcus abyssi (strain GE5 / Orsay).